The sequence spans 466 residues: Asparagine--tRNA ligase (466 aa).

It belongs to the class-II aminoacyl-tRNA synthetase family. Homodimer.

Its subcellular location is the cytoplasm. It carries out the reaction tRNA(Asn) + L-asparagine + ATP = L-asparaginyl-tRNA(Asn) + AMP + diphosphate + H(+). The sequence is that of Asparagine--tRNA ligase from Vibrio parahaemolyticus serotype O3:K6 (strain RIMD 2210633).